A 235-amino-acid polypeptide reads, in one-letter code: Large ribosomal subunit protein uL1 (235 aa).

Positions 1 to 22 (MSKNSKAYRAAAEKVDRSNPYT) are disordered.

Belongs to the universal ribosomal protein uL1 family. Part of the 50S ribosomal subunit.

Its function is as follows. Binds directly to 23S rRNA. The L1 stalk is quite mobile in the ribosome, and is involved in E site tRNA release. Protein L1 is also a translational repressor protein, it controls the translation of the L11 operon by binding to its mRNA. The chain is Large ribosomal subunit protein uL1 from Mycobacterium ulcerans (strain Agy99).